Here is a 115-residue protein sequence, read N- to C-terminus: NADH-ubiquinone oxidoreductase chain 3 (115 aa).

Transmembrane regions (helical) follow at residues 3 to 23 (LILM…IVAF), 56 to 76 (FFLV…LLPL), and 84 to 104 (PTLM…GLIY).

This sequence belongs to the complex I subunit 3 family.

It localises to the mitochondrion membrane. It catalyses the reaction a ubiquinone + NADH + 5 H(+)(in) = a ubiquinol + NAD(+) + 4 H(+)(out). Core subunit of the mitochondrial membrane respiratory chain NADH dehydrogenase (Complex I) that is believed to belong to the minimal assembly required for catalysis. Complex I functions in the transfer of electrons from NADH to the respiratory chain. The immediate electron acceptor for the enzyme is believed to be ubiquinone. This Polypterus ornatipinnis (Ornate bichir) protein is NADH-ubiquinone oxidoreductase chain 3 (MT-ND3).